Consider the following 234-residue polypeptide: tRNA (guanine-N(1)-)-methyltransferase (234 aa).

G113 provides a ligand contact to S-adenosyl-L-methionine.

This sequence belongs to the RNA methyltransferase TrmD family. In terms of assembly, homodimer.

The protein localises to the cytoplasm. The catalysed reaction is guanosine(37) in tRNA + S-adenosyl-L-methionine = N(1)-methylguanosine(37) in tRNA + S-adenosyl-L-homocysteine + H(+). Specifically methylates guanosine-37 in various tRNAs. The sequence is that of tRNA (guanine-N(1)-)-methyltransferase from Gluconobacter oxydans (strain 621H) (Gluconobacter suboxydans).